The primary structure comprises 147 residues: UPF0260 protein PMI1174 (147 aa).

It belongs to the UPF0260 family.

The protein is UPF0260 protein PMI1174 of Proteus mirabilis (strain HI4320).